A 320-amino-acid polypeptide reads, in one-letter code: Putative thiosulfate sulfurtransferase 2 (320 aa).

Rhodanese domains are found at residues 18-125 and 154-267; these read HAPK…PLSS and AINV…HACP. The Cysteine persulfide intermediate role is filled by Cys-233. Arg-238 contributes to the substrate binding site.

It catalyses the reaction thiosulfate + hydrogen cyanide = thiocyanate + sulfite + 2 H(+). Functionally, may be a sulfotransferase involved in the formation of thiosulfate. This is Putative thiosulfate sulfurtransferase 2 (cysA2) from Mycobacterium bovis (strain ATCC BAA-935 / AF2122/97).